Here is a 684-residue protein sequence, read N- to C-terminus: Probable pectin methyltransferase QUA2 (684 aa).

Residues 1–35 are disordered; sequence MSMPLQRGISGVRVSDSSDDLRDSQMKDKTERARS. Topologically, residues 1–86 are cytoplasmic; it reads MSMPLQRGIS…RHRLMLLFLK (86 aa). The span at 19–35 shows a compositional bias: basic and acidic residues; sequence DDLRDSQMKDKTERARS. The chain crosses the membrane as a helical; Signal-anchor for type II membrane protein span at residues 87–107; the sequence is ISLVLIVVIALAGSFWWTISI. Topologically, residues 108–684 are lumenal; sequence STSSRGHVYH…QKPFTKRQSI (577 aa). N-linked (GlcNAc...) asparagine glycosylation is found at asparagine 161 and asparagine 476.

It belongs to the methyltransferase superfamily. Ubiquitous.

It localises to the golgi apparatus membrane. The protein operates within glycan metabolism; pectin biosynthesis. Its function is as follows. May be involved in the synthesis of homogalacturonan. Required for normal cell adhesion and plant development. The sequence is that of Probable pectin methyltransferase QUA2 (QUA2) from Arabidopsis thaliana (Mouse-ear cress).